The primary structure comprises 408 residues: Argininosuccinate synthase (408 aa).

8–16 (AYSGGLDTT) contacts ATP. L-citrulline is bound at residue Tyr-86. Gly-116 is a binding site for ATP. L-aspartate is bound by residues Thr-118, Asn-122, and Asp-123. Residue Asn-122 participates in L-citrulline binding. 5 residues coordinate L-citrulline: Arg-126, Ser-177, Ser-186, Glu-263, and Tyr-275.

The protein belongs to the argininosuccinate synthase family. Type 1 subfamily. As to quaternary structure, homotetramer.

The protein resides in the cytoplasm. It carries out the reaction L-citrulline + L-aspartate + ATP = 2-(N(omega)-L-arginino)succinate + AMP + diphosphate + H(+). Its pathway is amino-acid biosynthesis; L-arginine biosynthesis; L-arginine from L-ornithine and carbamoyl phosphate: step 2/3. The sequence is that of Argininosuccinate synthase from Agathobacter rectalis (strain ATCC 33656 / DSM 3377 / JCM 17463 / KCTC 5835 / VPI 0990) (Eubacterium rectale).